We begin with the raw amino-acid sequence, 47 residues long: Variabilin (47 aa).

Positions 32-34 (RGD) match the Cell attachment site motif.

Post-translationally, contains 2 disulfide bonds. As to expression, expressed in salivary glands.

It localises to the secreted. Potently inhibits platelet aggregation induced by ADP (IC(50)=157 nM, complete inhibition at 514 nM). Also inhibits platelet aggregation induced by collagen and by the thrombin receptor peptide SFLLRNP. Is a potent antagonist of the fibrinogen receptor glycoprotein IIb-IIIa (ITGA2B/ITGB3) and the vitronectin receptor alpha-v/beta-3 (ITGAV/ITGB3). The polypeptide is Variabilin (Dermacentor variabilis (American dog tick)).